Consider the following 261-residue polypeptide: Enolase-phosphatase E1 (261 aa).

Positions 16 and 18 each coordinate Mg(2+). Substrate is bound by residues 153 to 154 (SS) and Lys187. Residue Asp212 participates in Mg(2+) binding.

The protein belongs to the HAD-like hydrolase superfamily. MasA/MtnC family. In terms of assembly, monomer. Mg(2+) serves as cofactor.

The protein resides in the cytoplasm. It is found in the nucleus. It catalyses the reaction 5-methylsulfanyl-2,3-dioxopentyl phosphate + H2O = 1,2-dihydroxy-5-(methylsulfanyl)pent-1-en-3-one + phosphate. Its pathway is amino-acid biosynthesis; L-methionine biosynthesis via salvage pathway; L-methionine from S-methyl-5-thio-alpha-D-ribose 1-phosphate: step 3/6. It functions in the pathway amino-acid biosynthesis; L-methionine biosynthesis via salvage pathway; L-methionine from S-methyl-5-thio-alpha-D-ribose 1-phosphate: step 4/6. Bifunctional enzyme that catalyzes the enolization of 2,3-diketo-5-methylthiopentyl-1-phosphate (DK-MTP-1-P) into the intermediate 2-hydroxy-3-keto-5-methylthiopentenyl-1-phosphate (HK-MTPenyl-1-P), which is then dephosphorylated to form the acireductone 1,2-dihydroxy-3-keto-5-methylthiopentene (DHK-MTPene). This is Enolase-phosphatase E1 (enoph1) from Danio rerio (Zebrafish).